The chain runs to 352 residues: Fe(3+) ions import ATP-binding protein FbpC (352 aa).

The 235-residue stretch at Leu5–Ile239 folds into the ABC transporter domain. ATP is bound at residue Gly37 to Thr44.

This sequence belongs to the ABC transporter superfamily. Fe(3+) ion importer (TC 3.A.1.10) family. The complex is composed of two ATP-binding proteins (FbpC), two transmembrane proteins (FbpB) and a solute-binding protein (FbpA).

It localises to the cell inner membrane. It carries out the reaction Fe(3+)(out) + ATP + H2O = Fe(3+)(in) + ADP + phosphate + H(+). Functionally, part of the ABC transporter complex FbpABC involved in Fe(3+) ions import. Responsible for energy coupling to the transport system. In Neisseria gonorrhoeae, this protein is Fe(3+) ions import ATP-binding protein FbpC.